Here is a 303-residue protein sequence, read N- to C-terminus: tRNA pseudouridine synthase B (303 aa).

Residue Asp-46 is the Nucleophile of the active site.

The protein belongs to the pseudouridine synthase TruB family. Type 1 subfamily.

The enzyme catalyses uridine(55) in tRNA = pseudouridine(55) in tRNA. Responsible for synthesis of pseudouridine from uracil-55 in the psi GC loop of transfer RNAs. The polypeptide is tRNA pseudouridine synthase B (Hydrogenovibrio crunogenus (strain DSM 25203 / XCL-2) (Thiomicrospira crunogena)).